The following is a 506-amino-acid chain: L-amino-acid oxidase (506 aa).

A signal peptide spans 1 to 18; sequence MNVFFTFSLLFLAALGSC. A disulfide bridge connects residues C28 and C191. E36 lines the Zn(2+) pocket. FAD-binding positions include 61–62, S62, 81–82, R89, and 105–108; these read MS, EA, and GPMR. A substrate-binding site is contributed by R108. 3 residues coordinate Zn(2+): E111, E118, and E150. Residue N190 is glycosylated (N-linked (GlcNAc...) asparagine). D219 is a binding site for Zn(2+). H241 serves as a coordination point for substrate. E248 is a binding site for Zn(2+). V279 contacts FAD. Residues E299 and H332 each contribute to the Zn(2+) site. A disulfide bridge links C349 with C430. Y390 provides a ligand contact to substrate. Position 458 (H458) interacts with Zn(2+). FAD-binding positions include E475 and 482–487; that span reads GWIDST. 482-483 is a substrate binding site; the sequence is GW.

It belongs to the flavin monoamine oxidase family. FIG1 subfamily. Homodimer; non-covalently linked. Stabilized by a single zinc-binding site located at the dimer interface (Asp-219, His-332 and His-458). Other zinc-bind sites can be understood as transient and non-specific, and appear due to the high concentration of zinc ions used in the crystallization experiments. FAD is required as a cofactor. As to expression, expressed by the venom gland.

The protein localises to the secreted. The catalysed reaction is an L-alpha-amino acid + O2 + H2O = a 2-oxocarboxylate + H2O2 + NH4(+). It carries out the reaction L-leucine + O2 + H2O = 4-methyl-2-oxopentanoate + H2O2 + NH4(+). The enzyme catalyses L-phenylalanine + O2 + H2O = 3-phenylpyruvate + H2O2 + NH4(+). It catalyses the reaction L-tryptophan + O2 + H2O = indole-3-pyruvate + H2O2 + NH4(+). The catalysed reaction is L-methionine + O2 + H2O = 4-methylsulfanyl-2-oxobutanoate + H2O2 + NH4(+). It carries out the reaction L-isoleucine + O2 + H2O = (S)-3-methyl-2-oxopentanoate + H2O2 + NH4(+). The enzyme catalyses L-tyrosine + O2 + H2O = 3-(4-hydroxyphenyl)pyruvate + H2O2 + NH4(+). In terms of biological role, catalyzes an oxidative deamination of predominantly hydrophobic and aromatic L-amino acids, thus producing hydrogen peroxide that may contribute to the diverse toxic effects of this enzyme. Shows high catalytic activity against L-Met, L-Leu, L-Phe, L-Trp, L-Tyr, L-Ile. Shows no or weak activity on L-Cys, L-Val, L-Gln, L-Thr, L-Ser, L-Lys, L-Arg, L-Asn, L-Glu, L-Gly, L-Pro, L-Asp and L-His. Induces platelet aggregation in platelet-rich plasma, probably due to hydrogen peroxide production, since catalase inhibits aggregation effect. Induces moderate mouse paw edema. Induces apoptosis and shows cytotoxicity against several cancer cell lines, which is inhibited by catalase. Shows hemolytic activity and antibacterial activities against both Gram-positive and Gram-negative bacteria. Has parasiticidal activities against both trypanosomes and leishmania, as a result of enzyme-catalyzed hydrogen peroxide production. Unlike other snake venom L-amino acid oxidases, does not induce hemorrhage (with 50 ug of enzyme). The chain is L-amino-acid oxidase from Bothrops atrox (Barba amarilla).